The primary structure comprises 97 residues: Aspartyl/glutamyl-tRNA(Asn/Gln) amidotransferase subunit C (97 aa).

The disordered stretch occupies residues 68 to 97; it reads ETGFTQEEALSNAPQQSQGQFRTPKVVESA. Over residues 70–88 the composition is skewed to polar residues; sequence GFTQEEALSNAPQQSQGQF.

It belongs to the GatC family. Heterotrimer of A, B and C subunits.

The enzyme catalyses L-glutamyl-tRNA(Gln) + L-glutamine + ATP + H2O = L-glutaminyl-tRNA(Gln) + L-glutamate + ADP + phosphate + H(+). It carries out the reaction L-aspartyl-tRNA(Asn) + L-glutamine + ATP + H2O = L-asparaginyl-tRNA(Asn) + L-glutamate + ADP + phosphate + 2 H(+). Allows the formation of correctly charged Asn-tRNA(Asn) or Gln-tRNA(Gln) through the transamidation of misacylated Asp-tRNA(Asn) or Glu-tRNA(Gln) in organisms which lack either or both of asparaginyl-tRNA or glutaminyl-tRNA synthetases. The reaction takes place in the presence of glutamine and ATP through an activated phospho-Asp-tRNA(Asn) or phospho-Glu-tRNA(Gln). The protein is Aspartyl/glutamyl-tRNA(Asn/Gln) amidotransferase subunit C of Akkermansia muciniphila (strain ATCC BAA-835 / DSM 22959 / JCM 33894 / BCRC 81048 / CCUG 64013 / CIP 107961 / Muc).